Consider the following 49-residue polypeptide: Small, acid-soluble spore protein O (49 aa).

Positions 1–49 (MVKRKANHVIPGMNDASAQGKGAGYNEELSNEPLTEAQKQNNKKRKKNQ) are disordered.

Belongs to the SspO family.

Its subcellular location is the spore core. This chain is Small, acid-soluble spore protein O, found in Anoxybacillus flavithermus (strain DSM 21510 / WK1).